A 101-amino-acid polypeptide reads, in one-letter code: MAKTSMVNRDIKRKKLAEKYAVKRAALKKIVSSQDATYEEKIEAATKLSKLPRDSSPSRHRSRCELSGRPRGVYSKFGLGRNKLREATMRGDVPGLRKASW.

The disordered stretch occupies residues leucine 48–arginine 69. Basic and acidic residues predominate over residues leucine 51–glycine 68.

The protein belongs to the universal ribosomal protein uS14 family. As to quaternary structure, part of the 30S ribosomal subunit. Contacts proteins S3 and S10.

Its function is as follows. Binds 16S rRNA, required for the assembly of 30S particles and may also be responsible for determining the conformation of the 16S rRNA at the A site. In Stenotrophomonas maltophilia (strain R551-3), this protein is Small ribosomal subunit protein uS14.